The chain runs to 104 residues: Large ribosomal subunit protein bL21c (104 aa).

Belongs to the bacterial ribosomal protein bL21 family. As to quaternary structure, part of the 50S ribosomal subunit.

The protein resides in the plastid. The protein localises to the chloroplast. This protein binds to 23S rRNA. The chain is Large ribosomal subunit protein bL21c from Pyropia yezoensis (Susabi-nori).